Here is an 800-residue protein sequence, read N- to C-terminus: Transducin beta-like protein 3 (800 aa).

An N-acetylalanine modification is found at A2. WD repeat units follow at residues 64-105, 107-146, 149-190, 193-232, 245-284, 290-329, 332-372, 374-413, 419-459, 477-516, 519-560, 562-602, and 604-642; these read EDQE…RLWK, IHTA…GTHH, GSPG…CLAV, AHYS…TSRT, LPEE…CVYT, GLRQ…LQKQ, GYSE…CQIL, GHTD…QVAC, GHTH…PSKN, CHDK…LLGV, GHRR…KTFE, HDAS…RTLD, and HEDK…EQAE. K407 is covalently cross-linked (Glycyl lysine isopeptide (Lys-Gly) (interchain with G-Cter in SUMO2)).

Part of the small subunit (SSU) processome, composed of more than 70 proteins and the RNA chaperone small nucleolar RNA (snoRNA) U3.

The protein resides in the nucleus. It localises to the nucleolus. Functionally, part of the small subunit (SSU) processome, first precursor of the small eukaryotic ribosomal subunit. During the assembly of the SSU processome in the nucleolus, many ribosome biogenesis factors, an RNA chaperone and ribosomal proteins associate with the nascent pre-rRNA and work in concert to generate RNA folding, modifications, rearrangements and cleavage as well as targeted degradation of pre-ribosomal RNA by the RNA exosome. This is Transducin beta-like protein 3 (Tbl3) from Rattus norvegicus (Rat).